Reading from the N-terminus, the 329-residue chain is Ficolin-2 (329 aa).

The signal sequence occupies residues 1–29 (MELGGAAGALGPSGPLLVCLCFGTLAAQA). One can recognise a Collagen-like domain in the interval 52–111 (GCPGLPGAPGLKGETGAAGLKGERGLPGVPGKAGPAGPKGSTGAQGEKGARGEKGESGQL). The segment at 64 to 113 (GETGAAGLKGERGLPGVPGKAGPAGPKGSTGAQGEKGARGEKGESGQLHS) is disordered. Positions 77–90 (LPGVPGKAGPAGPK) are enriched in low complexity. The Fibrinogen C-terminal domain occupies 112–329 (HSCATGPRTC…KVSEMKLRLT (218 aa)). 2 cysteine pairs are disulfide-bonded: Cys114–Cys142 and Cys121–Cys149. Residues Asp265, Asp267, Ser269, and Ser271 each contribute to the Ca(2+) site. An intrachain disulfide couples Cys273 to Cys286. Asn316 carries an N-linked (GlcNAc...) asparagine glycan.

The protein belongs to the ficolin lectin family. In terms of assembly, homotrimer. Interacts with elastin. Interacts with MASP1 and MASP2.

It is found in the secreted. In terms of biological role, may function in innate immunity through activation of the lectin complement pathway. Calcium-dependent and GlcNAc-binding lectin. The protein is Ficolin-2 (FCN2) of Bos taurus (Bovine).